The chain runs to 846 residues: uncharacterized protein (846 aa).

WD repeat units follow at residues 88–129 (TKHI…LLYD), 132–172 (EHSR…STIT), 175–215 (GNSE…LPFL), 219–258 (AHNG…KKSL), 262–309 (NNVS…IPYR), and 313–348 (CHDS…NAFN). The segment at 541–560 (PREASTPSESSNSSIESEDN) is disordered. Over residues 544-555 (ASTPSESSNSSI) the composition is skewed to low complexity. The stretch at 624–663 (FHRSSVTSASIKSREAVLSAGNSSRRASIFLDQLSLHGDT) is one WD 7 repeat.

This is an uncharacterized protein from Schizosaccharomyces pombe (strain 972 / ATCC 24843) (Fission yeast).